We begin with the raw amino-acid sequence, 586 residues long: Urease subunit alpha (586 aa).

The Urease domain maps to 134–586 (GAIDTHIHFI…LPMAQRYFLF (453 aa)). Ni(2+) is bound by residues histidine 139, histidine 141, and lysine 222. Residue lysine 222 is modified to N6-carboxylysine. A substrate-binding site is contributed by histidine 224. Ni(2+) is bound by residues histidine 251 and histidine 277. The active-site Proton donor is histidine 325. Aspartate 365 contacts Ni(2+).

Belongs to the metallo-dependent hydrolases superfamily. Urease alpha subunit family. Heterotrimer of UreA (gamma), UreB (beta) and UreC (alpha) subunits. Three heterotrimers associate to form the active enzyme. Ni cation is required as a cofactor. Carboxylation allows a single lysine to coordinate two nickel ions.

It localises to the cytoplasm. It carries out the reaction urea + 2 H2O + H(+) = hydrogencarbonate + 2 NH4(+). The protein operates within nitrogen metabolism; urea degradation; CO(2) and NH(3) from urea (urease route): step 1/1. This is Urease subunit alpha from Gloeothece citriformis (strain PCC 7424) (Cyanothece sp. (strain PCC 7424)).